Consider the following 445-residue polypeptide: Glutamate-1-semialdehyde 2,1-aminomutase (445 aa).

K281 bears the N6-(pyridoxal phosphate)lysine mark.

It belongs to the class-III pyridoxal-phosphate-dependent aminotransferase family. HemL subfamily. In terms of assembly, homodimer. Pyridoxal 5'-phosphate serves as cofactor.

Its subcellular location is the cytoplasm. It carries out the reaction (S)-4-amino-5-oxopentanoate = 5-aminolevulinate. The protein operates within porphyrin-containing compound metabolism; protoporphyrin-IX biosynthesis; 5-aminolevulinate from L-glutamyl-tRNA(Glu): step 2/2. This Nocardioides sp. (strain ATCC BAA-499 / JS614) protein is Glutamate-1-semialdehyde 2,1-aminomutase.